A 150-amino-acid polypeptide reads, in one-letter code: Propanediol utilization protein PduV (150 aa).

Residues 1–42 are targets protein to the BMC; the sequence is MKRIMLIGPSQCGKTSLTQCMRGEALHYQKTQAIVWSPTTID. 8–15 contributes to the GTP binding site; the sequence is GPSQCGKT.

This sequence belongs to the EutP/PduV family. Interacts with PduU, probably via the PduU beta-barrel which is predicted by modeling to be on the exterior of the BMC.

The protein localises to the bacterial microcompartment. It participates in polyol metabolism; 1,2-propanediol degradation. In terms of biological role, may play a role in the spatial distribution of the bacterial microcompartment (BMC) dedicated to 1,2-PD degradation, perhaps being involved in cytoskeleton dynamics; might bind GTP. This subunit is directly targeted to the BMC. Expression of a cosmid containing the full 21-gene pdu operon in E.coli allows E.coli to grow on 1,2-propanediol (1,2-PD) with the appearance of bacterial microcompartments (BMC) in its cytoplasm. Functionally, the 1,2-PD-specific bacterial microcompartment (BMC) concentrates low levels of 1,2-PD catabolic enzymes, concentrates volatile reaction intermediates thus enhancing pathway flux and keeps the level of toxic, mutagenic propionaldehyde low. In Citrobacter freundii, this protein is Propanediol utilization protein PduV.